The primary structure comprises 500 residues: L-arabinose isomerase (500 aa).

Mn(2+) is bound by residues E306, E333, H350, and H450.

It belongs to the arabinose isomerase family. Homohexamer. Requires Mn(2+) as cofactor.

It catalyses the reaction beta-L-arabinopyranose = L-ribulose. The protein operates within carbohydrate degradation; L-arabinose degradation via L-ribulose; D-xylulose 5-phosphate from L-arabinose (bacterial route): step 1/3. In terms of biological role, catalyzes the conversion of L-arabinose to L-ribulose. This chain is L-arabinose isomerase, found in Yersinia enterocolitica serotype O:8 / biotype 1B (strain NCTC 13174 / 8081).